A 374-amino-acid chain; its full sequence is Cysteine-type anaerobic sulfatase-maturating enzyme (374 aa).

A Radical SAM core domain is found at 1 to 227; it reads MKSLSMLIKP…LNKLFDLWFK (227 aa). Positions 15 and 19 each coordinate [4Fe-4S] cluster. Tyrosine 21 contributes to the S-adenosyl-L-methionine binding site. Cysteine 22 serves as a coordination point for [4Fe-4S] cluster. The S-adenosyl-L-methionine site is built by glycine 66, serine 122, arginine 134, and leucine 195. Residues cysteine 255, cysteine 261, and cysteine 276 each contribute to the [4Fe-4S] cluster site. Catalysis depends on aspartate 277, which acts as the Proton acceptor. Cysteine 317, cysteine 320, cysteine 326, cysteine 330, and cysteine 348 together coordinate [4Fe-4S] cluster.

Belongs to the radical SAM superfamily. Anaerobic sulfatase-maturating enzyme family. The cofactor is [4Fe-4S] cluster.

It carries out the reaction L-cysteinyl-[sulfatase] + S-adenosyl-L-methionine + H2O = 3-oxo-L-alanyl-[sulfatase] + hydrogen sulfide + 5'-deoxyadenosine + L-methionine + 2 H(+). It participates in protein modification; sulfatase oxidation. Involved in 'Cys-type' sulfatase maturation under anaerobic conditions. Catalyzes the post-translational modification of cysteine into 3-oxoalanine (also known as C(alpha)-formylglycine (FGly)), by a free radical chemical mechanism initiated via the reductive cleavage of S-adenosyl-L-methionine (SAM). The sequence is that of Cysteine-type anaerobic sulfatase-maturating enzyme from Clostridium novyi (strain NT).